Reading from the N-terminus, the 856-residue chain is Alginate lyase 7 (856 aa).

PbH1 repeat units lie at residues 133 to 155 (DYNVTVERVEIREVSRYAFDPHE), 157 to 179 (TINLTIRDSVAHDNGKDGFVADF), 180 to 202 (QIGAVFENNVSYNNGRHGFNIVT), 204 to 226 (SHDIVFTNNVAYGNGANGLVVQR), 234 to 256 (VYNVEIEGGSFHDNGQEGVLIKM), 257 to 279 (STDVTLQGAEIYGNGYAGVRVQG), 280 to 304 (VEDVRILDNYIHDNAQSKANAEVIV), and 320 to 342 (TQNVTVKGNTIVGSANSTYGIQE). Hemolysin-type calcium-binding repeat units lie at residues 387 to 402 (GSTGNDLLTGTPIADL), 404 to 421 (VGGSGNDTLSGDAGNDVL), 422 to 439 (EGGAGSDRLTGGEGADIF), 538 to 549 (GTEGDDSLTGNA), 554 to 563 (LDGGSGNDSL), 565 to 581 (GGLGNDVLRGGAGDDIL), 582 to 599 (NGGLGRDQLSGGEGADIF), 715 to 731 (GGAGRDILNGGAGDDIL), and 733 to 749 (GGSERDTLTGGSGADVF).

The protein belongs to the D-mannuronate C5-epimerase family. Ca(2+) serves as cofactor.

Its subcellular location is the secreted. The enzyme catalyses Eliminative cleavage of alginate to give oligosaccharides with 4-deoxy-alpha-L-erythro-hex-4-enuronosyl groups at their non-reducing ends and beta-D-mannuronate at their reducing end.. It carries out the reaction [(1-&gt;4)-beta-D-mannuronosyl](n) = [alginate](n). It participates in glycan biosynthesis; alginate biosynthesis. Inhibited by zinc. Its function is as follows. Converts beta-D-mannuronic acid (M) to alpha-L-guluronic acid (G). Has both epimerase and lyase activities. Contributes to abortive encystment by degrading the coat from inside the cyst. Important for cyst germination. This is Alginate lyase 7 from Azotobacter vinelandii.